A 347-amino-acid polypeptide reads, in one-letter code: Phenylalanine--tRNA ligase alpha subunit (347 aa).

Glutamate 261 contributes to the Mg(2+) binding site.

Belongs to the class-II aminoacyl-tRNA synthetase family. Phe-tRNA synthetase alpha subunit type 1 subfamily. As to quaternary structure, tetramer of two alpha and two beta subunits. Mg(2+) serves as cofactor.

Its subcellular location is the cytoplasm. It catalyses the reaction tRNA(Phe) + L-phenylalanine + ATP = L-phenylalanyl-tRNA(Phe) + AMP + diphosphate + H(+). This Streptococcus pyogenes serotype M18 (strain MGAS8232) protein is Phenylalanine--tRNA ligase alpha subunit.